An 883-amino-acid polypeptide reads, in one-letter code: HTH-type transcriptional regulator AlkS (883 aa).

An HTH luxR-type domain is found at 816 to 881 (ENKAGDFLTL…QAIIEAERQG (66 aa)). A DNA-binding region (H-T-H motif) is located at residues 840–859 (NKQIATKMYVTEDAIKWHMR).

It participates in hydrocarbon metabolism; alkane degradation. Functionally, may act as a transcriptional regulator of AlkB. The polypeptide is HTH-type transcriptional regulator AlkS (alkS) (Pseudomonas putida (Arthrobacter siderocapsulatus)).